Consider the following 331-residue polypeptide: ADP-L-glycero-D-manno-heptose-6-epimerase (331 aa).

NADP(+)-binding positions include 11–12, 32–33, lysine 39, lysine 54, 75–79, and asparagine 92; these read FI, DN, and EGACS. Tyrosine 139 acts as the Proton acceptor in catalysis. Lysine 143 is a binding site for NADP(+). Asparagine 168 contacts substrate. Positions 169 and 177 each coordinate NADP(+). Catalysis depends on lysine 177, which acts as the Proton acceptor. Substrate-binding positions include arginine 179, histidine 186, 200 to 203, arginine 213, and tyrosine 292; that span reads FGEY.

It belongs to the NAD(P)-dependent epimerase/dehydratase family. HldD subfamily. Homopentamer. It depends on NADP(+) as a cofactor.

The catalysed reaction is ADP-D-glycero-beta-D-manno-heptose = ADP-L-glycero-beta-D-manno-heptose. The protein operates within nucleotide-sugar biosynthesis; ADP-L-glycero-beta-D-manno-heptose biosynthesis; ADP-L-glycero-beta-D-manno-heptose from D-glycero-beta-D-manno-heptose 7-phosphate: step 4/4. Functionally, catalyzes the interconversion between ADP-D-glycero-beta-D-manno-heptose and ADP-L-glycero-beta-D-manno-heptose via an epimerization at carbon 6 of the heptose. In Cupriavidus metallidurans (strain ATCC 43123 / DSM 2839 / NBRC 102507 / CH34) (Ralstonia metallidurans), this protein is ADP-L-glycero-D-manno-heptose-6-epimerase.